A 314-amino-acid polypeptide reads, in one-letter code: Phospho-N-acetylmuramoyl-pentapeptide-transferase (314 aa).

The next 10 helical transmembrane spans lie at 4–24 (LIFYITLITFIFLLFLYPIFI), 52–72 (TMGGILFILAIFFLSLLTYFI), 77–97 (LFLIIGVASLLFGFIGFLDDY), 111–131 (IQKLLLQFLFSIVIVYLISIF), 146–166 (LDLKFFYPLWGIIYLTGMSNA), 169–189 (LTDGIDGLSGGIYVISALFTA), 191–211 (IAGINFNHIPLLILPVIAYLF), 219–239 (IFMGDTGSLALGGILGSLALY), 242–262 (VELFTILTCFIFISEMFSVII), and 294–314 (IVLIFWTINILTGIVALGGVL).

The protein belongs to the glycosyltransferase 4 family. MraY subfamily. The cofactor is Mg(2+).

It localises to the cell inner membrane. The catalysed reaction is UDP-N-acetyl-alpha-D-muramoyl-L-alanyl-gamma-D-glutamyl-meso-2,6-diaminopimeloyl-D-alanyl-D-alanine + di-trans,octa-cis-undecaprenyl phosphate = di-trans,octa-cis-undecaprenyl diphospho-N-acetyl-alpha-D-muramoyl-L-alanyl-D-glutamyl-meso-2,6-diaminopimeloyl-D-alanyl-D-alanine + UMP. The protein operates within cell wall biogenesis; peptidoglycan biosynthesis. Its function is as follows. Catalyzes the initial step of the lipid cycle reactions in the biosynthesis of the cell wall peptidoglycan: transfers peptidoglycan precursor phospho-MurNAc-pentapeptide from UDP-MurNAc-pentapeptide onto the lipid carrier undecaprenyl phosphate, yielding undecaprenyl-pyrophosphoryl-MurNAc-pentapeptide, known as lipid I. The polypeptide is Phospho-N-acetylmuramoyl-pentapeptide-transferase (Petrotoga mobilis (strain DSM 10674 / SJ95)).